A 352-amino-acid chain; its full sequence is RNA 3'-terminal phosphate cyclase (352 aa).

ATP is bound by residues glutamine 102 and 292 to 296; that span reads HMGDQ. Residue histidine 318 is the Tele-AMP-histidine intermediate of the active site.

It belongs to the RNA 3'-terminal cyclase family. Type 1 subfamily.

It localises to the cytoplasm. It catalyses the reaction a 3'-end 3'-phospho-ribonucleotide-RNA + ATP = a 3'-end 2',3'-cyclophospho-ribonucleotide-RNA + AMP + diphosphate. Functionally, catalyzes the conversion of 3'-phosphate to a 2',3'-cyclic phosphodiester at the end of RNA. The mechanism of action of the enzyme occurs in 3 steps: (A) adenylation of the enzyme by ATP; (B) transfer of adenylate to an RNA-N3'P to produce RNA-N3'PP5'A; (C) and attack of the adjacent 2'-hydroxyl on the 3'-phosphorus in the diester linkage to produce the cyclic end product. The biological role of this enzyme is unknown but it is likely to function in some aspects of cellular RNA processing. This Methanopyrus kandleri (strain AV19 / DSM 6324 / JCM 9639 / NBRC 100938) protein is RNA 3'-terminal phosphate cyclase.